The primary structure comprises 468 residues: RUS family member 1 (468 aa).

Ala-2 carries the N-acetylalanine modification. Thr-49 is modified (phosphothreonine). The helical transmembrane segment at 247–267 threads the bilayer; sequence LLMLPLVSGCPGFSLGCFFFL.

The protein belongs to the RUS1 family.

The protein resides in the membrane. The sequence is that of RUS family member 1 from Homo sapiens (Human).